Reading from the N-terminus, the 356-residue chain is Tyrosine recombinase XerS (356 aa).

Residues 16-121 enclose the Core-binding (CB) domain; that stretch reads VMPWYVLDYY…ALSSLYKYLT (106 aa). The 186-residue stretch at 169–354 folds into the Tyr recombinase domain; that stretch reads AFLDYVDKEY…VNDEQKNALD (186 aa). Catalysis depends on residues arginine 210, lysine 234, histidine 306, arginine 309, and histidine 332. Tyrosine 341 serves as the catalytic O-(3'-phospho-DNA)-tyrosine intermediate.

The protein belongs to the 'phage' integrase family. XerS subfamily.

It localises to the cytoplasm. Its activity is regulated as follows. FtsK is required for recombination. In terms of biological role, site-specific tyrosine recombinase, which acts by catalyzing the cutting and rejoining of the recombining DNA molecules. Essential to convert dimers of the bacterial chromosome into monomers to permit their segregation at cell division. This is Tyrosine recombinase XerS from Streptococcus pyogenes serotype M28 (strain MGAS6180).